A 373-amino-acid chain; its full sequence is P2Y purinoceptor 1 (373 aa).

Topologically, residues 1–51 (MTEVLWPAVPNGTDTAFLADPGSPWGNSTVTSTAAVASPFKCALTKTGFQF) are extracellular. Residues asparagine 11 and asparagine 27 are each glycosylated (N-linked (GlcNAc...) asparagine). Disulfide bonds link cysteine 42–cysteine 296 and cysteine 124–cysteine 202. Residue lysine 46 participates in ADP binding. A helical transmembrane segment spans residues 52 to 74 (YYLPAVYILVFIIGFLGNSVAIW). The Cytoplasmic segment spans residues 75-87 (MFVFHMKPWSGIS). Residues 88–109 (VYMFNLALADFLYVLTLPALIF) form a helical membrane-spanning segment. Residues 110 to 125 (YYFNKTDWIFGDAMCK) are Extracellular-facing. Asparagine 113 carries N-linked (GlcNAc...) asparagine glycosylation. Residues 126–147 (LQRFIFHVNLYGSILFLTCISA) traverse the membrane as a helical segment. Residues 148–166 (HRYSGVVYPLKSLGRLKKK) lie on the Cytoplasmic side of the membrane. The chain crosses the membrane as a helical span at residues 167-188 (NAVYISVLVWLIVVVGISPILF). Topologically, residues 189–214 (YSGTGIRKNKTITCYDTTSDEYLRSY) are extracellular. Asparagine 197 carries an N-linked (GlcNAc...) asparagine glycan. An ADP-binding site is contributed by 203–205 (YDT). The chain crosses the membrane as a helical span at residues 215-237 (FIYSMCTTVAMFCVPLVLILGCY). Residues 238-260 (GLIVRALIYKDLDNSPLRRKSIY) lie on the Cytoplasmic side of the membrane. The chain crosses the membrane as a helical span at residues 261 to 284 (LVIIVLTVFAVSYIPFHVMKTMNL). ADP-binding positions include 283–287 (NLRAR), 303–306 (YATY), and arginine 310. Over 285–303 (RARLDFQTPEMCAFNDRVY) the chain is Extracellular. The helical transmembrane segment at 304–325 (ATYQVTRGLASLNSCVDPILYF) threads the bilayer. The Cytoplasmic segment spans residues 326-373 (LAGDTFRRRLSRATRKASRRSEANLQSKSEDMTLNILSEFKQNGDTSL).

The protein belongs to the G-protein coupled receptor 1 family.

It is found in the cell membrane. In terms of biological role, receptor for extracellular adenine nucleotides such as ADP. In platelets, binding to ADP leads to mobilization of intracellular calcium ions via activation of phospholipase C, a change in platelet shape, and ultimately platelet aggregation. The protein is P2Y purinoceptor 1 (P2RY1) of Bos taurus (Bovine).